We begin with the raw amino-acid sequence, 199 residues long: BREX protein BrxA (199 aa).

Belongs to the BrxA family.

Functionally, BREX systems (bacteriophage exclusion) provide immunity against bacteriophage. Part of a type 1 BREX system which protects against dsDNA phage. This system allows phage adsorption but prevents phage DNA replication, without degradation of the phage DNA. Methylation of bacterial DNA by PglX guides self/non-self discrimination. In Paramagnetospirillum magneticum (strain ATCC 700264 / AMB-1) (Magnetospirillum magneticum), this protein is BREX protein BrxA.